Reading from the N-terminus, the 480-residue chain is Sestrin-2 (480 aa).

Methionine 1 carries the N-acetylmethionine modification. The interval 20-45 is disordered; that stretch reads PGGVGDSGPGEEQRESRARRGPRGPS. An N-terminal domain; mediates the alkylhydroperoxide reductase activity region spans residues 66-239; it reads GLEALMSSGR…APTPPSEQSS (174 aa). The Cysteine sulfenic acid (-SOH) intermediate role is filled by cysteine 125. Lysine 175 participates in a covalent cross-link: Glycyl lysine isopeptide (Lys-Gly) (interchain with G-Cter in ubiquitin). Residues 222-252 are disordered; sequence ADGSPAPQAPTPPSEQSSPPSRDPLNNSGGF. Serine 249 carries the phosphoserine modification. The interval 308 to 480 is C-terminal domain; mediates TORC1 regulation; sequence PHPDMLCFVE…ALRAITRYMT (173 aa). L-leucine contacts are provided by residues 374–377, threonine 386, and glutamate 451; that span reads TYNT.

This sequence belongs to the sestrin family. In terms of assembly, interacts with the GATOR2 complex which is composed of MIOS, SEC13, SEH1L, WDR24 and WDR59; the interaction is negatively regulated by leucine. Conveys leucine availability via direct interaction with SEH1L and WDR24 components of the GATOR2 complex. Interacts with RRAGA, RRAGB, RRAGC and RRAGD; may function as a guanine nucleotide dissociation inhibitor for RRAGs and regulate them. May interact with the TORC2 complex. Interacts with KEAP1, RBX1, SQSTM and ULK1; to regulate the degradation of KEAP1. May also associate with the complex composed of TSC1, TSC2 and the AMP-responsive protein kinase/AMPK to regulate TORC1 signaling. May interact with PRDX1. Post-translationally, phosphorylated by ULK1 at multiple sites. Ubiquitinated at Lys-175 by RNF167 via 'Lys-63'-linked polyubiquitination in response to leucine deprivation: ubiquitination promotes SESN2-interaction with the GATOR2 complex, leading to inhibit the TORC1 signaling pathway. Deubiquitinated at Lys-175 by STAMBPL1, promoting the TORC1 signaling pathway. Ubiquitinated by RNF186; ubiquitination mediates proteasomal degradation.

It is found in the cytoplasm. The catalysed reaction is a hydroperoxide + L-cysteinyl-[protein] = S-hydroxy-L-cysteinyl-[protein] + an alcohol. In terms of biological role, functions as an intracellular leucine sensor that negatively regulates the mTORC1 signaling pathway through the GATOR complex. In absence of leucine, binds the GATOR subcomplex GATOR2 and prevents mTORC1 signaling. Binding of leucine to SESN2 disrupts its interaction with GATOR2 thereby activating the TORC1 signaling pathway. This stress-inducible metabolic regulator also plays a role in protection against oxidative and genotoxic stresses. May negatively regulate protein translation in response to endoplasmic reticulum stress, via mTORC1. May positively regulate the transcription by NFE2L2 of genes involved in the response to oxidative stress by facilitating the SQSTM1-mediated autophagic degradation of KEAP1. May also mediate TP53 inhibition of TORC1 signaling upon genotoxic stress. Moreover, may prevent the accumulation of reactive oxygen species (ROS) through the alkylhydroperoxide reductase activity born by the N-terminal domain of the protein. Was originally reported to contribute to oxidative stress resistance by reducing PRDX1. However, this could not be confirmed. The protein is Sestrin-2 of Pongo abelii (Sumatran orangutan).